The sequence spans 1321 residues: Lysine-specific demethylase 3A (1321 aa).

Phosphoserine is present on residues Ser264 and Ser325. Disordered regions lie at residues 307-336 (ATPP…IPQG), 383-402 (LTEP…QENR), and 438-472 (KHLE…GKKV). Polar residues predominate over residues 316 to 327 (QQSTPQAANSPP). A Phosphoserine modification is found at Ser445. The segment at 662–687 (CDVCDTTIFNLHWVCPRCGFGVCVDC) adopts a C6-type zinc-finger fold. Ser766 carries the phosphoserine modification. Residues 885-889 (LRNLL) carry the LXXLL motif motif. The residue at position 895 (Lys895) is an N6-acetyllysine. The JmjC domain occupies 1058-1281 (MPSRFDDLMA…HCFWLTQEFR (224 aa)). The Fe cation site is built by His1120, Asp1122, and His1249.

It belongs to the JHDM2 histone demethylase family. Interacts with VRK1. Fe(2+) is required as a cofactor.

It localises to the cytoplasm. Its subcellular location is the nucleus. The catalysed reaction is N(6),N(6)-dimethyl-L-lysyl(9)-[histone H3] + 2 2-oxoglutarate + 2 O2 = L-lysyl(9)-[histone H3] + 2 formaldehyde + 2 succinate + 2 CO2. In terms of biological role, histone demethylase that specifically demethylates 'Lys-9' of histone H3, thereby playing a central role in histone code. Preferentially demethylates mono- and dimethylated H3 'Lys-9' residue, with a preference for dimethylated residue, while it has weak or no activity on trimethylated H3 'Lys-9'. Demethylation of Lys residue generates formaldehyde and succinate. Involved in hormone-dependent transcriptional activation, by participating in recruitment to androgen-receptor target genes, resulting in H3 'Lys-9' demethylation and transcriptional activation. Involved in spermatogenesis by regulating expression of target genes such as PRM1 and TNP1 which are required for packaging and condensation of sperm chromatin. Involved in obesity resistance through regulation of metabolic genes such as PPARA and UCP1. The protein is Lysine-specific demethylase 3A (KDM3A) of Homo sapiens (Human).